Reading from the N-terminus, the 202-residue chain is NADH-quinone oxidoreductase subunit C (202 aa).

It belongs to the complex I 30 kDa subunit family. NDH-1 is composed of 14 different subunits. Subunits NuoB, C, D, E, F, and G constitute the peripheral sector of the complex.

It localises to the cell inner membrane. The enzyme catalyses a quinone + NADH + 5 H(+)(in) = a quinol + NAD(+) + 4 H(+)(out). In terms of biological role, NDH-1 shuttles electrons from NADH, via FMN and iron-sulfur (Fe-S) centers, to quinones in the respiratory chain. The immediate electron acceptor for the enzyme in this species is believed to be ubiquinone. Couples the redox reaction to proton translocation (for every two electrons transferred, four hydrogen ions are translocated across the cytoplasmic membrane), and thus conserves the redox energy in a proton gradient. The chain is NADH-quinone oxidoreductase subunit C from Paracidovorax citrulli (strain AAC00-1) (Acidovorax citrulli).